The primary structure comprises 1120 residues: Putative GTPase-activating protein AN11010 (1120 aa).

Residues 291-479 (GLPNRLRGEI…RVLDVFFLEG (189 aa)) enclose the Rab-GAP TBC domain. Disordered stretches follow at residues 673–702 (DSPG…PSPA), 859–903 (DEVK…PNNP), 960–979 (AAKQ…SGGI), 1017–1068 (RNAL…ETDR), and 1081–1120 (GKDD…EFES). Low complexity predominate over residues 864-878 (ESTPSPEGETPGTPS). Over residues 960–970 (AAKQQPTSSGP) the composition is skewed to polar residues. Over residues 1023 to 1032 (DDDDEDDEDD) the composition is skewed to acidic residues. Composition is skewed to basic and acidic residues over residues 1057–1068 (DPERRSVRETDR) and 1081–1095 (GKDD…DSHQ).

The polypeptide is Putative GTPase-activating protein AN11010 (Emericella nidulans (strain FGSC A4 / ATCC 38163 / CBS 112.46 / NRRL 194 / M139) (Aspergillus nidulans)).